We begin with the raw amino-acid sequence, 198 residues long: Protein hunchback (198 aa).

Disordered stretches follow at residues 16-117 and 152-198; these read SHHH…PMQS and NDKL…KYMA. Residues 17-31 show a composition bias toward basic residues; that stretch reads HHHHHHHAHHSHHQH. Composition is skewed to low complexity over residues 35–46 and 68–83; these read SNSNSNASSPHQ and QQQQ…QQQQ. Residues 95–105 show a composition bias toward polar residues; it reads PSPSNNDQNSP. The span at 179-198 shows a compositional bias: basic and acidic residues; that stretch reads EPEKEHDLMSNSSEDMKYMA.

It belongs to the hunchback C2H2-type zinc-finger protein family.

It localises to the nucleus. In terms of biological role, gap class segmentation protein that controls development of head structures. The polypeptide is Protein hunchback (hb) (Drosophila disjuncta (Fruit fly)).